The chain runs to 411 residues: Multidrug resistance protein MdtA (411 aa).

Positions 1–26 (MNNNKKTKKRFSLIIILLIVIAGAIA) are cleaved as a signal peptide. Over residues 35–55 (SAPPVSKDTPTANTPNRSTAG) the composition is skewed to polar residues. Positions 35 to 64 (SAPPVSKDTPTANTPNRSTAGSRRPPMPPV) are disordered.

The protein belongs to the membrane fusion protein (MFP) (TC 8.A.1) family. In terms of assembly, part of a tripartite efflux system composed of MdtA, MdtB and MdtC.

The protein localises to the cell inner membrane. In Proteus mirabilis (strain HI4320), this protein is Multidrug resistance protein MdtA.